A 171-amino-acid polypeptide reads, in one-letter code: Translationally-controlled tumor protein homolog (171 aa).

The TCTP domain occupies 1–171; that stretch reads MIIYRDCISQ…FKDGLEMEKC (171 aa).

Belongs to the TCTP family. In terms of tissue distribution, expressed by the venom gland.

Its subcellular location is the secreted. Venom protein that causes edema, enhances vascular permeability and is likely related to the inflammatory activity of the venom. In Micrurus fulvius (Eastern coral snake), this protein is Translationally-controlled tumor protein homolog.